A 90-amino-acid polypeptide reads, in one-letter code: Small ribosomal subunit protein uS15 (90 aa).

This sequence belongs to the universal ribosomal protein uS15 family. As to quaternary structure, part of the 30S ribosomal subunit. Forms a bridge to the 50S subunit in the 70S ribosome, contacting the 23S rRNA.

In terms of biological role, one of the primary rRNA binding proteins, it binds directly to 16S rRNA where it helps nucleate assembly of the platform of the 30S subunit by binding and bridging several RNA helices of the 16S rRNA. Functionally, forms an intersubunit bridge (bridge B4) with the 23S rRNA of the 50S subunit in the ribosome. This Campylobacter jejuni subsp. jejuni serotype O:6 (strain 81116 / NCTC 11828) protein is Small ribosomal subunit protein uS15.